The following is a 168-amino-acid chain: UPF0262 protein BBta_0898 (168 aa).

This sequence belongs to the UPF0262 family.

The polypeptide is UPF0262 protein BBta_0898 (Bradyrhizobium sp. (strain BTAi1 / ATCC BAA-1182)).